A 144-amino-acid polypeptide reads, in one-letter code: F420-non-reducing hydrogenase vhc iron-sulfur subunit D (144 aa).

This sequence belongs to the MvhD/VhuD family. The F420-non-reducing hydrogenase vhc is composed of three subunits; VhcA, VhcD and VhcG. [2Fe-2S] cluster serves as cofactor.

This Methanococcus voltae protein is F420-non-reducing hydrogenase vhc iron-sulfur subunit D (vhcD).